We begin with the raw amino-acid sequence, 154 residues long: Endoribonuclease YbeY (154 aa).

3 residues coordinate Zn(2+): His113, His117, and His123.

This sequence belongs to the endoribonuclease YbeY family. Requires Zn(2+) as cofactor.

The protein resides in the cytoplasm. Functionally, single strand-specific metallo-endoribonuclease involved in late-stage 70S ribosome quality control and in maturation of the 3' terminus of the 16S rRNA. The sequence is that of Endoribonuclease YbeY from Vibrio parahaemolyticus serotype O3:K6 (strain RIMD 2210633).